We begin with the raw amino-acid sequence, 419 residues long: Serine hydroxymethyltransferase (419 aa).

(6S)-5,6,7,8-tetrahydrofolate is bound by residues leucine 119 and 123 to 125; that span reads GHL. Lysine 228 carries the post-translational modification N6-(pyridoxal phosphate)lysine.

Belongs to the SHMT family. Homodimer. Pyridoxal 5'-phosphate is required as a cofactor.

It localises to the cytoplasm. It carries out the reaction (6R)-5,10-methylene-5,6,7,8-tetrahydrofolate + glycine + H2O = (6S)-5,6,7,8-tetrahydrofolate + L-serine. It functions in the pathway one-carbon metabolism; tetrahydrofolate interconversion. The protein operates within amino-acid biosynthesis; glycine biosynthesis; glycine from L-serine: step 1/1. In terms of biological role, catalyzes the reversible interconversion of serine and glycine with tetrahydrofolate (THF) serving as the one-carbon carrier. This reaction serves as the major source of one-carbon groups required for the biosynthesis of purines, thymidylate, methionine, and other important biomolecules. Also exhibits THF-independent aldolase activity toward beta-hydroxyamino acids, producing glycine and aldehydes, via a retro-aldol mechanism. This chain is Serine hydroxymethyltransferase, found in Desulfosudis oleivorans (strain DSM 6200 / JCM 39069 / Hxd3) (Desulfococcus oleovorans).